The primary structure comprises 834 residues: Protein translocase subunit SecA (834 aa).

ATP is bound by residues Gln85, 103–107 (GEGKT), and Asp491. Residues 790–809 (RETSTNINDGEGGSHEPIKR) are disordered. The Zn(2+) site is built by Cys820, Cys822, Cys831, and Cys832.

It belongs to the SecA family. As to quaternary structure, monomer and homodimer. Part of the essential Sec protein translocation apparatus which comprises SecA, SecYEG and auxiliary proteins SecDF. Other proteins may also be involved. Zn(2+) serves as cofactor.

Its subcellular location is the cell membrane. It is found in the cytoplasm. It carries out the reaction ATP + H2O + cellular proteinSide 1 = ADP + phosphate + cellular proteinSide 2.. Functionally, part of the Sec protein translocase complex. Interacts with the SecYEG preprotein conducting channel. Has a central role in coupling the hydrolysis of ATP to the transfer of proteins into and across the cell membrane, serving as an ATP-driven molecular motor driving the stepwise translocation of polypeptide chains across the membrane. The chain is Protein translocase subunit SecA from Clostridium novyi (strain NT).